The chain runs to 383 residues: MNSTLSSQVENHSIYYNFSEKNSQFLAFENDDCHLPLAMIFTLALAYGAVIILGVSGNLALIIIILKQKEMRNVTNILIVNLSFSDLLVAIMCLPFTFVYTLMDHWVFGEVMCKLNPFVQCVSITVSIFSLVLIAVERHQLIINPRGWRPSNRHAYVGIAVIWVLAVASSLPFLIYQVLTDEPFQNVTLDAFKDKYVCFDKFLSDSHRLSYTTLLLVLQYFGPLCFIFICYFKIYIRLKRRNNMMDKMRDNKYRSSETKRINVMLLSIVVAFAVCWLPLTIFNTVFDWNHQIIATCNHNLLFLLCHLTAMISTCINPIFYGFLNKNFQRDLQFFFNFCDFRSRDDDYEVIAMSTMHTDVSKTSLKQASPVALKKIHSDDNEKI.

Residues methionine 1–alanine 44 are Extracellular-facing. N-linked (GlcNAc...) asparagine glycans are attached at residues asparagine 2, asparagine 11, and asparagine 17. A helical transmembrane segment spans residues leucine 45–isoleucine 65. At leucine 66–asparagine 76 the chain is on the cytoplasmic side. A helical transmembrane segment spans residues isoleucine 77–threonine 97. At phenylalanine 98–asparagine 116 the chain is on the extracellular side. Cysteine 113 and cysteine 198 form a disulfide bridge. Residues proline 117–glutamate 137 traverse the membrane as a helical segment. The Cytoplasmic portion of the chain corresponds to arginine 138–histidine 154. Residues alanine 155–isoleucine 175 form a helical membrane-spanning segment. The Extracellular segment spans residues tyrosine 176–tyrosine 211. Residues threonine 212–phenylalanine 232 traverse the membrane as a helical segment. Residues lysine 233–arginine 260 are Cytoplasmic-facing. The helical transmembrane segment at isoleucine 261–isoleucine 281 threads the bilayer. Topologically, residues phenylalanine 282 to asparagine 299 are extracellular. A helical membrane pass occupies residues leucine 300 to tyrosine 320. The Cytoplasmic portion of the chain corresponds to glycine 321 to isoleucine 383. Cysteine 338 carries the S-palmitoyl cysteine lipid modification. Phosphoserine is present on serine 368.

The protein belongs to the G-protein coupled receptor 1 family.

The protein resides in the cell membrane. Its function is as follows. Receptor for neuropeptide Y and peptide YY. The sequence is that of Neuropeptide Y receptor type 1 (NPY1R) from Sus scrofa (Pig).